Reading from the N-terminus, the 284-residue chain is 2-dehydro-3-deoxyphosphooctonate aldolase (284 aa).

This sequence belongs to the KdsA family.

The protein resides in the cytoplasm. The catalysed reaction is D-arabinose 5-phosphate + phosphoenolpyruvate + H2O = 3-deoxy-alpha-D-manno-2-octulosonate-8-phosphate + phosphate. It participates in carbohydrate biosynthesis; 3-deoxy-D-manno-octulosonate biosynthesis; 3-deoxy-D-manno-octulosonate from D-ribulose 5-phosphate: step 2/3. The protein operates within bacterial outer membrane biogenesis; lipopolysaccharide biosynthesis. This Synechococcus sp. (strain ATCC 27144 / PCC 6301 / SAUG 1402/1) (Anacystis nidulans) protein is 2-dehydro-3-deoxyphosphooctonate aldolase.